Here is a 684-residue protein sequence, read N- to C-terminus: Glycine--tRNA ligase beta subunit (684 aa).

It belongs to the class-II aminoacyl-tRNA synthetase family. Tetramer of two alpha and two beta subunits.

It localises to the cytoplasm. It catalyses the reaction tRNA(Gly) + glycine + ATP = glycyl-tRNA(Gly) + AMP + diphosphate. The chain is Glycine--tRNA ligase beta subunit from Pseudomonas syringae pv. tomato (strain ATCC BAA-871 / DC3000).